We begin with the raw amino-acid sequence, 374 residues long: Pulmonary surfactant-associated protein D (374 aa).

Residues 1-19 (MLPFLSMLVLLVQPLGNLG) form the signal peptide. Cysteine 34 and cysteine 39 each carry S-nitrosocysteine. The segment at 38 to 222 (MCSPTENGLP…GIKGESGLPD (185 aa)) is disordered. The 177-residue stretch at 45 to 221 (GLPGRDGRDG…RGIKGESGLP (177 aa)) folds into the Collagen-like domain. Residues 49 to 64 (RDGRDGREGPRGEKGD) are compositionally biased toward basic and acidic residues. Residues 70-79 (PMGLSGLQGP) are compositionally biased toward low complexity. Residue asparagine 89 is glycosylated (N-linked (GlcNAc...) asparagine). Composition is skewed to low complexity over residues 137-149 (KGEA…VGAP) and 169-200 (APGV…RGPP). The span at 203–215 (KGDRGVPGDRGIK) shows a compositional bias: basic and acidic residues. A coiled-coil region spans residues 222-253 (DSAALRQQMEALKGKLQRLEVAFSHYQKAALF). Residues 259–374 (VGDKIFRTAD…GEQRLVICEF (116 aa)) form the C-type lectin domain. Cystine bridges form between cysteine 280/cysteine 372 and cysteine 350/cysteine 364.

This sequence belongs to the SFTPD family. As to quaternary structure, oligomeric complex of 4 set of homotrimers. Post-translationally, S-nitrosylation at Cys-34 and Cys-39 alters the quaternary structure which results in a pro-inflammatory chemoattractive signaling activity with macrophages.

It is found in the secreted. Its subcellular location is the extracellular space. The protein resides in the extracellular matrix. The protein localises to the surface film. Its function is as follows. Contributes to the lung's defense against inhaled microorganisms, organic antigens and toxins. Interacts with compounds such as bacterial lipopolysaccharides, oligosaccharides and fatty acids and modulates leukocyte action in immune response. May participate in the extracellular reorganization or turnover of pulmonary surfactant. Binds strongly maltose residues and to a lesser extent other alpha-glucosyl moieties. The polypeptide is Pulmonary surfactant-associated protein D (Sftpd) (Mus musculus (Mouse)).